The following is a 434-amino-acid chain: E3 ubiquitin-protein ligase siah-1 (434 aa).

Positions 27–88 (FEEDENAGPE…NGNTPSVTIP (62 aa)) are disordered. Positions 43–55 (SSSSASSQRSSAS) are enriched in low complexity. The segment covering 74-88 (MSNNQNGNTPSVTIP) has biased composition (polar residues). The RING-type; degenerate zinc finger occupies 171-206 (CPVCLEYMLPPYMQCPSGHLVCSNCRPKLQCCPTCR). The tract at residues 220–415 (IANTVRFPCK…LGINVTISRI (196 aa)) is SBD. An SIAH-type; degenerate zinc finger spans residues 223 to 283 (TVRFPCKFSN…VMDHLKKVHK (61 aa)). The Zn(2+) site is built by C228, C235, H247, C251, C258, C265, H277, and H282.

The protein belongs to the SINA (Seven in absentia) family. As to quaternary structure, interacts with tir-1.

It carries out the reaction S-ubiquitinyl-[E2 ubiquitin-conjugating enzyme]-L-cysteine + [acceptor protein]-L-lysine = [E2 ubiquitin-conjugating enzyme]-L-cysteine + N(6)-ubiquitinyl-[acceptor protein]-L-lysine.. Its pathway is protein modification; protein ubiquitination. E3 ubiquitin-protein ligase that mediates ubiquitination and subsequent proteasomal degradation of target proteins. E3 ubiquitin ligases accept ubiquitin from an E2 ubiquitin-conjugating enzyme in the form of a thioester and then directly transfers the ubiquitin to targeted substrates. It probably triggers the ubiquitin-mediated degradation of different substrates. The protein is E3 ubiquitin-protein ligase siah-1 of Caenorhabditis briggsae.